We begin with the raw amino-acid sequence, 154 residues long: Myoglobin (154 aa).

One can recognise a Globin domain in the interval 2–148 (VLSDAEWQLV…FRKDIAAKYK (147 aa)). At serine 4 the chain carries Phosphoserine. Histidine 65 provides a ligand contact to nitrite. Position 65 (histidine 65) interacts with O2. The residue at position 68 (threonine 68) is a Phosphothreonine. Histidine 94 contributes to the heme b binding site.

Belongs to the globin family. As to quaternary structure, monomeric.

It localises to the cytoplasm. The protein localises to the sarcoplasm. It carries out the reaction Fe(III)-heme b-[protein] + nitric oxide + H2O = Fe(II)-heme b-[protein] + nitrite + 2 H(+). The enzyme catalyses H2O2 + AH2 = A + 2 H2O. Its function is as follows. Monomeric heme protein which primary function is to store oxygen and facilitate its diffusion within muscle tissues. Reversibly binds oxygen through a pentacoordinated heme iron and enables its timely and efficient release as needed during periods of heightened demand. Depending on the oxidative conditions of tissues and cells, and in addition to its ability to bind oxygen, it also has a nitrite reductase activity whereby it regulates the production of bioactive nitric oxide. Under stress conditions, like hypoxia and anoxia, it also protects cells against reactive oxygen species thanks to its pseudoperoxidase activity. In Megaptera novaeangliae (Humpback whale), this protein is Myoglobin (MB).